The chain runs to 386 residues: Succinate--CoA ligase [ADP-forming] subunit beta (386 aa).

Residues 9–243 (KQLFRKYSIP…PAEDDPAEAE (235 aa)) enclose the ATP-grasp domain. Residues Lys-45, 52 to 54 (GRG), Glu-98, Val-101, and Glu-106 each bind ATP. Asn-198 and Asp-212 together coordinate Mg(2+). Substrate contacts are provided by residues Asn-263 and 320 to 322 (GIL).

This sequence belongs to the succinate/malate CoA ligase beta subunit family. Heterotetramer of two alpha and two beta subunits. Mg(2+) serves as cofactor.

It catalyses the reaction succinate + ATP + CoA = succinyl-CoA + ADP + phosphate. The enzyme catalyses GTP + succinate + CoA = succinyl-CoA + GDP + phosphate. Its pathway is carbohydrate metabolism; tricarboxylic acid cycle; succinate from succinyl-CoA (ligase route): step 1/1. Succinyl-CoA synthetase functions in the citric acid cycle (TCA), coupling the hydrolysis of succinyl-CoA to the synthesis of either ATP or GTP and thus represents the only step of substrate-level phosphorylation in the TCA. The beta subunit provides nucleotide specificity of the enzyme and binds the substrate succinate, while the binding sites for coenzyme A and phosphate are found in the alpha subunit. The sequence is that of Succinate--CoA ligase [ADP-forming] subunit beta from Desulfotalea psychrophila (strain LSv54 / DSM 12343).